The following is a 461-amino-acid chain: Ribitol-5-phosphate transferase FKTN (461 aa).

The Cytoplasmic portion of the chain corresponds to 1–7 (MSRINKN). The segment at 6 to 27 (KNVVLALLTLTSSAFLLFQLYY) is required and sufficient for interaction with POMGNT1. The chain crosses the membrane as a helical; Signal-anchor for type II membrane protein span at residues 8 to 28 (VVLALLTLTSSAFLLFQLYYY). Topologically, residues 29–461 (KHYLSARNGP…SEWDEVIQLY (433 aa)) are lumenal. The N-linked (GlcNAc...) asparagine glycan is linked to Asn92.

Belongs to the LicD transferase family. Forms a complex composed of FKTN/fukutin, FKRP and RXYLT1/TMEM5. Interacts (via transmembrane domain) with POMGNT1; the interaction is direct and is required for normal POMGNT1 location in Golgi membranes. As to expression, expressed in the retina, with highest levels found in the inner segments of photoreceptors and the outer plexiform layer (at protein level). Expressed at lower levels in the inner and outer nuclear layers, the inner plexiform layers, and the ganglion cell layers of the retina (at protein level). Expressed in the heart, brain, spleen, lung, liver, skeletal muscle, kidney and testis.

The protein localises to the golgi apparatus membrane. It localises to the cytoplasm. The protein resides in the nucleus. It is found in the endoplasmic reticulum. The enzyme catalyses 3-O-[beta-D-GalNAc-(1-&gt;3)-beta-D-GlcNAc-(1-&gt;4)-(O-6-P-alpha-D-Man)]-Thr-[protein] + CDP-L-ribitol = 3-O-[Rib-ol-P-3-beta-D-GalNAc-(1-&gt;3)-beta-D-GlcNAc-(1-&gt;4)-(O-6-P-alpha-D-Man)]-Thr-[protein] + CMP + H(+). The protein operates within protein modification; protein glycosylation. Its function is as follows. Catalyzes the transfer of CDP-ribitol to the distal N-acetylgalactosamine of the phosphorylated O-mannosyl trisaccharide (N-acetylgalactosamine-beta-3-N-acetylglucosamine-beta-4-(phosphate-6-)mannose), a carbohydrate structure present in alpha-dystroglycan (DAG1). This constitutes the first step in the formation of the ribitol 5-phosphate tandem repeat which links the phosphorylated O-mannosyl trisaccharide to the ligand binding moiety composed of repeats of 3-xylosyl-alpha-1,3-glucuronic acid-beta-1. Required for normal location of POMGNT1 in Golgi membranes, and for normal POMGNT1 activity. May interact with and reinforce a large complex encompassing the outside and inside of muscle membranes. Could be involved in brain development. The chain is Ribitol-5-phosphate transferase FKTN from Mus musculus (Mouse).